Here is a 282-residue protein sequence, read N- to C-terminus: Pantothenate synthetase (282 aa).

31–38 provides a ligand contact to ATP; the sequence is MGALHDGH. Histidine 38 (proton donor) is an active-site residue. Residue glutamine 62 coordinates (R)-pantoate. Beta-alanine is bound at residue glutamine 62. 148-151 contributes to the ATP binding site; that stretch reads GKKD. Glutamine 154 contacts (R)-pantoate. ATP-binding positions include valine 177 and 185–188; that span reads KSSR.

It belongs to the pantothenate synthetase family. As to quaternary structure, homodimer.

The protein resides in the cytoplasm. The catalysed reaction is (R)-pantoate + beta-alanine + ATP = (R)-pantothenate + AMP + diphosphate + H(+). Its pathway is cofactor biosynthesis; (R)-pantothenate biosynthesis; (R)-pantothenate from (R)-pantoate and beta-alanine: step 1/1. Catalyzes the condensation of pantoate with beta-alanine in an ATP-dependent reaction via a pantoyl-adenylate intermediate. The polypeptide is Pantothenate synthetase (Staphylococcus saprophyticus subsp. saprophyticus (strain ATCC 15305 / DSM 20229 / NCIMB 8711 / NCTC 7292 / S-41)).